We begin with the raw amino-acid sequence, 176 residues long: Telomerase RNA component interacting RNase (176 aa).

The segment covering 1–12 has biased composition (basic and acidic residues); that stretch reads MAARGRRAEPQG. Residues 1-121 form a disordered region; that stretch reads MAARGRRAEP…TLSFVGKRRG (121 aa). A compositionally biased stretch (low complexity) spans 45-56; that stretch reads SGAGSSPVSGGV. A compositionally biased stretch (basic and acidic residues) spans 68-83; the sequence is LFKRKMEEEQRQRQEE. Over residues 90-101 the composition is skewed to low complexity; sequence RPDQSAAAAGPG. Lys-146 is modified (N6-acetyllysine).

In terms of assembly, part of the telomerase RNA 3' end complex which contains about 488 proteins.

Zn(2+) inhibits the RNase activity while Mg(2+), Ca(2+), Mn(2+), K(+), Na(+), EDTA and EGTA show little effect on the exoribonuclease activity. Exoribonuclease that is part of the telomerase RNA 3' end processing complex and which has the ability to cleave all four unpaired RNA nucleotides from the 5' end or 3' end with higher efficiency for purine bases. In Homo sapiens (Human), this protein is Telomerase RNA component interacting RNase.